We begin with the raw amino-acid sequence, 167 residues long: MSHKQGGHKTKGLVFPSNWTGKWLYRAIINTPKWQLNSVLNSYKFNQWIAFESMQLNGLQLSPRVSPETNFIRSVEVGIAVSEAGKQYESVPHKVPLEDKVRLLKEELEVPIIGDMVRSMTQAVLPGPMPVMYPNTAEVETPVEIKGKEIPIEFKEEGKEIPVMAVG.

This is an uncharacterized protein from Acidianus bottle-shaped virus (isolate Italy/Pozzuoli) (ABV).